Reading from the N-terminus, the 359-residue chain is UPF0283 membrane protein RHE_CH02332 (359 aa).

Residues 1–61 are disordered; that stretch reads MSKPPSDLPR…EDPFINPDRD (61 aa). 2 helical membrane passes run 77 to 97 and 111 to 131; these read FGKI…GLWT and LGYA…ALVI.

Belongs to the UPF0283 family.

The protein localises to the cell inner membrane. The protein is UPF0283 membrane protein RHE_CH02332 of Rhizobium etli (strain ATCC 51251 / DSM 11541 / JCM 21823 / NBRC 15573 / CFN 42).